Here is a 185-residue protein sequence, read N- to C-terminus: Capsid protein (185 aa).

Positions Asn-136 to Cys-185 are disordered. Positions Val-149–Ser-178 are enriched in basic residues. Phosphoserine; by host occurs at positions 157, 164, and 172. One copy of the 1; half-length repeat lies at Ser-157 to Pro-163. A 3 X 8 AA repeats of S-P-R-R-R-[PR]-S-Q region spans residues Ser-157–Gln-179. The short motif at Arg-160–Arg-177 is the Bipartite nuclear localization signal element. A run of 2 repeats spans residues Ser-164–Gln-171 and Ser-172–Gln-179. Positions Gln-179–Cys-185 are RNA binding.

It belongs to the orthohepadnavirus core antigen family. Homodimerizes, then multimerizes. Interacts with cytosol exposed regions of viral L glycoprotein present in the reticulum-to-Golgi compartment. Interacts with human FLNB. Phosphorylated form interacts with host importin alpha; this interaction depends on the exposure of the NLS, which itself depends upon genome maturation and/or phosphorylation of the capsid protein. Interacts with host NUP153. Phosphorylated by host SRPK1, SRPK2, and maybe protein kinase C or GAPDH. Phosphorylation is critical for pregenomic RNA packaging. Protein kinase C phosphorylation is stimulated by HBx protein and may play a role in transport of the viral genome to the nucleus at the late step during the viral replication cycle.

The protein resides in the virion. Its subcellular location is the host cytoplasm. Its function is as follows. Self assembles to form an icosahedral capsid. Most capsids appear to be large particles with an icosahedral symmetry of T=4 and consist of 240 copies of capsid protein, though a fraction forms smaller T=3 particles consisting of 180 capsid proteins. Entering capsids are transported along microtubules to the nucleus. Phosphorylation of the capsid is thought to induce exposure of nuclear localization signal in the C-terminal portion of the capsid protein that allows binding to the nuclear pore complex via the importin (karyopherin-) alpha and beta. Capsids are imported in intact form through the nuclear pore into the nuclear basket, where it probably binds NUP153. Only capsids that contain the mature viral genome can release the viral DNA and capsid protein into the nucleoplasm. Immature capsids get stuck in the basket. Capsids encapsulate the pre-genomic RNA and the P protein. Pre-genomic RNA is reverse-transcribed into DNA while the capsid is still in the cytoplasm. The capsid can then either be directed to the nucleus, providing more genomes for transcription, or bud through the endoplasmic reticulum to provide new virions. The sequence is that of Capsid protein from Homo sapiens (Human).